Reading from the N-terminus, the 324-residue chain is Probable UDP-sugar transporter protein SLC35A4 (324 aa).

Over 1–18 (MSVEDGGMPGLGRPRQAR) the chain is Cytoplasmic. A helical membrane pass occupies residues 19 to 39 (WTLMLLLSTAMYGAHAPLLAL). At 40-52 (CHVDGRVPFRPSS) the chain is on the lumenal side. Residues 53-73 (AVLLTELTKLLLCAFSLLVGW) form a helical membrane-spanning segment. At 74 to 85 (QAWPQGPPPWRQ) the chain is on the cytoplasmic side. The chain crosses the membrane as a helical span at residues 86-106 (AAPFALSALLYGANNNLVIYL). The Lumenal portion of the chain corresponds to 107 to 142 (QRYMDPSTYQVLSNLKIGSTAVLYCLCLRHRLSVRQ). The chain crosses the membrane as a helical span at residues 143–163 (GLALLLLMAAGACYAAGGLQV). At 164-180 (PGNTLPSPPPAAAASPM) the chain is on the cytoplasmic side. A helical transmembrane segment spans residues 181-201 (PLHITPLGLLLLILYCLISGL). The Lumenal portion of the chain corresponds to 202-214 (SSVYTELLMKRQR). A helical transmembrane segment spans residues 215-235 (LPLALQNLFLYTFGVLLNLGL). Residues 236-250 (HAGGGSGPGLLEGFS) lie on the Cytoplasmic side of the membrane. The chain crosses the membrane as a helical span at residues 251 to 271 (GWAALVVLSQALNGLLMSAVM). At 272–275 (KHGS) the chain is on the lumenal side. Residues 276-298 (SITRLFVVSCSLVVNAVLSAVLL) form a helical membrane-spanning segment. Topologically, residues 299-324 (RLQLTAAFFLATLLIGLAMRLYYGSR) are cytoplasmic.

Belongs to the nucleotide-sugar transporter family. SLC35A subfamily. As to quaternary structure, found in a complex with SLC35A2 and SLC35A3.

It localises to the golgi apparatus membrane. The enzyme catalyses CDP-L-ribitol(in) + CDP(out) = CDP-L-ribitol(out) + CDP(in). Mediates the transport of CDP-ribitol. Does not exhibit CMP-sialic acid, UDP-galactose and UDP-N-acetylglucosamine transport activity. The polypeptide is Probable UDP-sugar transporter protein SLC35A4 (Homo sapiens (Human)).